The sequence spans 239 residues: N-glycosylase/DNA lyase (239 aa).

Residues Q24, S51, and W62 each coordinate 8-oxoguanine. The segment at 118–182 is helix-hairpin-helix; the sequence is ERYYEDMTLL…EDVRIIKLTR (65 aa). The active-site Schiff-base intermediate with DNA is the K142. 8-oxoguanine contacts are provided by F146 and P172. The active site involves D174. 8-oxoguanine is bound by residues D208 and W212.

The protein belongs to the archaeal N-glycosylase/DNA lyase (AGOG) family.

The enzyme catalyses 2'-deoxyribonucleotide-(2'-deoxyribose 5'-phosphate)-2'-deoxyribonucleotide-DNA = a 3'-end 2'-deoxyribonucleotide-(2,3-dehydro-2,3-deoxyribose 5'-phosphate)-DNA + a 5'-end 5'-phospho-2'-deoxyribonucleoside-DNA + H(+). Its function is as follows. DNA repair enzyme that is part of the base excision repair (BER) pathway; protects from oxidative damage by removing the major product of DNA oxidation, 8-oxoguanine (GO), from single- and double-stranded DNA substrates. The polypeptide is N-glycosylase/DNA lyase (Pyrococcus horikoshii (strain ATCC 700860 / DSM 12428 / JCM 9974 / NBRC 100139 / OT-3)).